Reading from the N-terminus, the 1861-residue chain is Polyketide synthase 2 (1861 aa).

Residues 109–525 (DSKIAIIGMS…GGNSALLLED (417 aa)) form the Ketosynthase family 3 (KS3) domain. Catalysis depends on for beta-ketoacyl synthase activity residues Cys-264, His-399, and His-441. Residues 626–931 (GFVFSGQGAQ…PSLHRKDDGW (306 aa)) form a malonyl-CoA:ACP transacylase (MAT) domain region. The active-site For acyl/malonyl transferase activity is the Ser-716. The tract at residues 1008–1312 (TSSVQKVIQQ…VFGGMTVLPP (305 aa)) is product template (PT) domain. Residues 1012–1146 (QKVIQQTDGP…CILRFADPKS (135 aa)) form an N-terminal hotdog fold region. Positions 1012 to 1318 (QKVIQQTDGP…VLPPRRGADA (307 aa)) constitute a PKS/mFAS DH domain. The active-site Proton acceptor; for dehydratase activity is His-1045. The interval 1174–1318 (DSLLSKGIVY…VLPPRRGADA (145 aa)) is C-terminal hotdog fold. Catalysis depends on Asp-1232, which acts as the Proton donor; for dehydratase activity. The region spanning 1356–1433 (SPQSGAIHRI…ELRLFLAADQ (78 aa)) is the Carrier 1 domain. Ser-1393 carries the O-(pantetheine 4'-phosphoryl)serine modification. The segment at 1441 to 1470 (CESSNGQHTPQTSDKGSGTLTAQKPDHDTD) is disordered. Polar residues predominate over residues 1442 to 1462 (ESSNGQHTPQTSDKGSGTLTA). Residues 1472–1546 (EMTLNRVCAI…SLQKTLRGTE (75 aa)) form the Carrier 2 domain. Ser-1506 is modified (O-(pantetheine 4'-phosphoryl)serine). The tract at residues 1582-1855 (ASAPHATSIL…IIEMSNLIGD (274 aa)) is thioesterase (TE) domain. The active-site For thioesterase activity is the Ser-1685.

In terms of biological role, polyketide synthase; part of the Pks2 gene cluster that mediates the formation of infectious structures (appressoria), enabling these fungi to kill insects faster. The product of the Pks2 gene cluster is different from the one of Pks1 and has still not been identified. This Metarhizium acridum (strain CQMa 102) protein is Polyketide synthase 2.